A 115-amino-acid polypeptide reads, in one-letter code: Large ribosomal subunit protein P2y (115 aa).

The segment at 63–115 (ASVPSGGGGGVAVASATSGGGGGGGASAAESKKEEKKEEKEESDDDMGFSLFE) is disordered. The span at 92-102 (ESKKEEKKEEK) shows a compositional bias: basic and acidic residues. Position 105 is a phosphoserine (serine 105).

This sequence belongs to the eukaryotic ribosomal protein P1/P2 family. P1 and P2 exist as dimers at the large ribosomal subunit. Phosphorylated.

Plays an important role in the elongation step of protein synthesis. This chain is Large ribosomal subunit protein P2y (RPP2B), found in Arabidopsis thaliana (Mouse-ear cress).